Here is a 352-residue protein sequence, read N- to C-terminus: Photosystem II D2 protein (352 aa).

Residues 40–60 (CAFLSIGGWLTGTTFVTSWYT) traverse the membrane as a helical segment. H117 contributes to the chlorophyll a binding site. Residues 124–140 (GFCLRQIEIARLVGIRP) form a helical membrane-spanning segment. Pheophytin a contacts are provided by Q129 and N142. Residues 152-165 (VFVSVFLMYPLGQS) form a helical membrane-spanning segment. H197 lines the chlorophyll a pocket. The helical transmembrane segment at 207 to 227 (GALLCAIHGATVENTLFQDGE) threads the bilayer. The a plastoquinone site is built by H214 and F261. H214 is a Fe cation binding site. H268 contributes to the Fe cation binding site. A helical membrane pass occupies residues 278–294 (GLWMSSIGIVGLAFNLR).

Belongs to the reaction center PufL/M/PsbA/D family. As to quaternary structure, PSII is composed of 1 copy each of membrane proteins PsbA, PsbB, PsbC, PsbD, PsbE, PsbF, PsbH, PsbI, PsbJ, PsbK, PsbL, PsbM, PsbT, PsbX, PsbY, PsbZ, Psb30/Ycf12, peripheral proteins PsbO, CyanoQ (PsbQ), PsbU, PsbV and a large number of cofactors. It forms dimeric complexes. The D1/D2 heterodimer binds P680, chlorophylls that are the primary electron donor of PSII, and subsequent electron acceptors. It shares a non-heme iron and each subunit binds pheophytin, quinone, additional chlorophylls, carotenoids and lipids. There is also a Cl(-1) ion associated with D1 and D2, which is required for oxygen evolution. The PSII complex binds additional chlorophylls, carotenoids and specific lipids. is required as a cofactor.

Its subcellular location is the cellular thylakoid membrane. It carries out the reaction 2 a plastoquinone + 4 hnu + 2 H2O = 2 a plastoquinol + O2. Functionally, photosystem II (PSII) is a light-driven water:plastoquinone oxidoreductase that uses light energy to abstract electrons from H(2)O, generating O(2) and a proton gradient subsequently used for ATP formation. It consists of a core antenna complex that captures photons, and an electron transfer chain that converts photonic excitation into a charge separation. The D1/D2 (PsbA/PsbD) reaction center heterodimer binds P680, the primary electron donor of PSII as well as several subsequent electron acceptors. D2 is needed for assembly of a stable PSII complex. This Trichodesmium erythraeum (strain IMS101) protein is Photosystem II D2 protein.